The chain runs to 217 residues: GrpE protein homolog 1, mitochondrial (217 aa).

The N-terminal 27 residues, 1-27, are a transit peptide targeting the mitochondrion; it reads MAARCVRLARRSLPALALSFRPSPRLL. Positions 37-56 are disordered; it reads GQNLDEDLGHCEPKTDPPSA. K94 is subject to N6-acetyllysine; alternate. Residue K94 is modified to N6-succinyllysine; alternate. K100 is subject to N6-acetyllysine. K120 is subject to N6-succinyllysine. K215 carries the post-translational modification N6-acetyllysine; alternate. K215 carries the post-translational modification N6-succinyllysine; alternate.

Belongs to the GrpE family. In terms of assembly, probable component of the PAM complex at least composed of a mitochondrial HSP70 protein, GRPEL1 or GRPEL2, TIMM44, TIMM16/PAM16 and TIMM14/DNAJC19. Binds to HSP70, HSC70 and HSJ1B.

The protein resides in the mitochondrion matrix. In terms of biological role, essential component of the PAM complex, a complex required for the translocation of transit peptide-containing proteins from the inner membrane into the mitochondrial matrix in an ATP-dependent manner. Seems to control the nucleotide-dependent binding of mitochondrial HSP70 to substrate proteins. The chain is GrpE protein homolog 1, mitochondrial (Grpel1) from Mus musculus (Mouse).